Reading from the N-terminus, the 258-residue chain is Ubiquinone/menaquinone biosynthesis C-methyltransferase UbiE (258 aa).

Residues 1 to 20 (MSESRTSADGGMETSYGFRE) form a disordered region. S-adenosyl-L-methionine is bound by residues threonine 81, aspartate 102, and 130–131 (NA).

It belongs to the class I-like SAM-binding methyltransferase superfamily. MenG/UbiE family.

The catalysed reaction is a 2-demethylmenaquinol + S-adenosyl-L-methionine = a menaquinol + S-adenosyl-L-homocysteine + H(+). It carries out the reaction a 2-methoxy-6-(all-trans-polyprenyl)benzene-1,4-diol + S-adenosyl-L-methionine = a 5-methoxy-2-methyl-3-(all-trans-polyprenyl)benzene-1,4-diol + S-adenosyl-L-homocysteine + H(+). Its pathway is quinol/quinone metabolism; menaquinone biosynthesis; menaquinol from 1,4-dihydroxy-2-naphthoate: step 2/2. It participates in cofactor biosynthesis; ubiquinone biosynthesis. Methyltransferase required for the conversion of demethylmenaquinol (DMKH2) to menaquinol (MKH2) and the conversion of 2-polyprenyl-6-methoxy-1,4-benzoquinol (DDMQH2) to 2-polyprenyl-3-methyl-6-methoxy-1,4-benzoquinol (DMQH2). This Rhizobium etli (strain ATCC 51251 / DSM 11541 / JCM 21823 / NBRC 15573 / CFN 42) protein is Ubiquinone/menaquinone biosynthesis C-methyltransferase UbiE.